We begin with the raw amino-acid sequence, 448 residues long: Tryptophan dimethylallyltransferase 1 (448 aa).

L-tryptophan-binding positions include 80-81 (IL) and glutamate 89. Substrate-binding residues include arginine 100, lysine 186, and tyrosine 188. 2 residues coordinate L-tryptophan: tyrosine 190 and arginine 251. Arginine 264, lysine 266, tyrosine 268, glutamine 350, tyrosine 352, tyrosine 416, and tyrosine 420 together coordinate substrate.

It belongs to the tryptophan dimethylallyltransferase family. As to quaternary structure, homodimer.

The catalysed reaction is L-tryptophan + dimethylallyl diphosphate = 4-(3-methylbut-2-enyl)-L-tryptophan + diphosphate. Its pathway is alkaloid biosynthesis; ergot alkaloid biosynthesis. In terms of biological role, catalyzes the first step of ergot alkaloid biosynthesis. Ergot alkaloids, which are produced by endophyte fungi, can enhance plant host fitness, but also cause livestock toxicosis to host plants. This Epichloe coenophiala (Tall fescue endophyte fungus) protein is Tryptophan dimethylallyltransferase 1 (dmaW1).